Here is a 120-residue protein sequence, read N- to C-terminus: Small ribosomal subunit protein uS13 (120 aa).

The segment at 93-120 (GLPVRGQNTKNNARTRKGPRRTVANKKK) is disordered. Basic residues predominate over residues 105 to 120 (ARTRKGPRRTVANKKK).

This sequence belongs to the universal ribosomal protein uS13 family. In terms of assembly, part of the 30S ribosomal subunit. Has been shown to cross-link to S19 forming a loose heterodimer. Forms two bridges to the 50S subunit in the 70S ribosome.

Its function is as follows. Located at the top of the head of the 30S subunit, it contacts several helices of the 16S rRNA. In the 70S ribosome it contacts the 23S rRNA (bridge B1a) and protein L5 of the 50S subunit (bridge B1b), connecting the 2 subunits; these bridges are implicated in subunit movement. Contacts the tRNA in the A and P-sites. The polypeptide is Small ribosomal subunit protein uS13 (rpsM) (Geobacillus stearothermophilus (Bacillus stearothermophilus)).